The chain runs to 215 residues: HTH-type transcriptional regulator for conjugative element R391 (215 aa).

One can recognise an HTH cro/C1-type domain in the interval 8–61 (LNHALQLTGVTQSELARRIGIKQQSISQICSGKSARSRYTMQIAEALRVNAHWL). Residues 19–38 (QSELARRIGIKQQSISQICS) constitute a DNA-binding region (H-T-H motif).

Functionally, may control the expression of the integrase and inhibit excision of the mobile element R391, and regulate the expression of other genes as well. In Providencia rettgeri, this protein is HTH-type transcriptional regulator for conjugative element R391.